Reading from the N-terminus, the 206-residue chain is Large ribosomal subunit protein uL4 (206 aa).

Residues 43-94 (ARSGNRAQKDREQVKHTTKKPWRQKGTGRARAGMSSSPLWRGGGRIFPNSPE) form a disordered region. Residues 58-70 (HTTKKPWRQKGTG) show a composition bias toward basic residues.

Belongs to the universal ribosomal protein uL4 family. Part of the 50S ribosomal subunit.

Functionally, one of the primary rRNA binding proteins, this protein initially binds near the 5'-end of the 23S rRNA. It is important during the early stages of 50S assembly. It makes multiple contacts with different domains of the 23S rRNA in the assembled 50S subunit and ribosome. Forms part of the polypeptide exit tunnel. The protein is Large ribosomal subunit protein uL4 of Polynucleobacter asymbioticus (strain DSM 18221 / CIP 109841 / QLW-P1DMWA-1) (Polynucleobacter necessarius subsp. asymbioticus).